The following is a 96-amino-acid chain: Large ribosomal subunit protein uL23 (96 aa).

The protein belongs to the universal ribosomal protein uL23 family. As to quaternary structure, part of the 50S ribosomal subunit. Contacts protein L29, and trigger factor when it is bound to the ribosome.

One of the early assembly proteins it binds 23S rRNA. One of the proteins that surrounds the polypeptide exit tunnel on the outside of the ribosome. Forms the main docking site for trigger factor binding to the ribosome. The protein is Large ribosomal subunit protein uL23 of Solidesulfovibrio magneticus (strain ATCC 700980 / DSM 13731 / RS-1) (Desulfovibrio magneticus).